The chain runs to 170 residues: RNA pyrophosphohydrolase (170 aa).

The Nudix hydrolase domain maps to 8-151 (PYRPNVGIAL…KKALYAELIP (144 aa)). A Nudix box motif is present at residues 42–63 (GGIDEGETPQVAALREMGEEIG).

It belongs to the Nudix hydrolase family. RppH subfamily. It depends on a divalent metal cation as a cofactor.

Functionally, accelerates the degradation of transcripts by removing pyrophosphate from the 5'-end of triphosphorylated RNA, leading to a more labile monophosphorylated state that can stimulate subsequent ribonuclease cleavage. The polypeptide is RNA pyrophosphohydrolase (Gluconobacter oxydans (strain 621H) (Gluconobacter suboxydans)).